We begin with the raw amino-acid sequence, 98 residues long: MVSYLCMSVSSGWLSIGKIAIKDGKCDPKNGNLYAIGEKWYNDEDCFEITCIQGDKGSVAQQVASCPVHAVKPGCELVFPGGTYPKCCPYYECPKLVI.

The N-terminal stretch at 1–24 is a signal peptide; it reads MVSYLCMSVSSGWLSIGKIAIKDG.

It belongs to the scoloptoxin-16 family. In terms of processing, contains 4 disulfide bonds. Expressed by the venom gland.

Its subcellular location is the secreted. This is U-scoloptoxin(16)-Er9a from Ethmostigmus rubripes (Giant centipede).